The sequence spans 856 residues: DNA endonuclease RBBP8 (856 aa).

Residues 25–48 (ELWSKLKECHDKDLQELLMKIGKL) are essential for binding to the MRN complex and for RPA focus formation on DNA damage. 2 coiled-coil regions span residues 38-87 (LQEL…EDRL) and 120-141 (ITELMNDKNALQDENKRLSEQL). 2 disordered regions span residues 143-174 (DMQKNRHRRKSDEENPADTGDGEDGVIPDSPL) and 423-456 (DSEQHKQTGNRYGKRKNAEAEQEESCESSFDKEN). Residues 156 to 168 (ENPADTGDGEDGV) are compositionally biased toward acidic residues. Residues 493–515 (SSSRTKLTISLVPEKPDTKTILH) are damage-recruitment motif. The interval 695 to 732 (SPSQSISCKERSDIPSIENKKITSEKEHESKGEPYQKQ) is disordered. The segment covering 702 to 730 (CKERSDIPSIENKKITSEKEHESKGEPYQ) has biased composition (basic and acidic residues). The residue at position 806 (threonine 806) is a Phosphothreonine. A Phosphothreonine; by ATR modification is found at threonine 818.

It belongs to the COM1/SAE2/CtIP family. In terms of assembly, homotetramer; formed by antiparallel association of helical extensions protruding from the N-termini of two parallel coiled-coil dimers. Interacts with the MRN complex; the interaction links DNA sensing to resection. Interacts with samhd1. Post-translationally, phosphorylation at Thr-818 by atr promotes recruitment to double-strand breaks (DSBs).

It localises to the nucleus. The protein localises to the chromosome. Functionally, endonuclease that cooperates with the MRE11-RAD50-NBN (MRN) complex in DNA-end resection, the first step of double-strand break (DSB) repair through the homologous recombination (HR) pathway. Functions downstream of the MRN complex and ATM, promotes ATR activation and its recruitment to DSBs in the S/G2 phase facilitating the generation of ssDNA. Specifically promotes the endonuclease activity of the MRN complex to clear DNA ends containing protein adducts: recruited to DSBs by nbn following phosphorylation, and promotes the endonuclease of mre11 to clear protein-DNA adducts and generate clean double-strand break ends. The MRN complex and rbbp8/CtIP are also required for chromosome alignment during metaphase. The chain is DNA endonuclease RBBP8 (rbbp8) from Xenopus laevis (African clawed frog).